Consider the following 354-residue polypeptide: COP9 signalosome complex subunit 5 (354 aa).

The 138-residue stretch at V56–D193 folds into the MPN domain. Zn(2+) is bound by residues H139, H141, and D152. Positions H139–D152 match the JAMM motif motif. A disordered region spans residues D193 to S212.

It belongs to the peptidase M67A family. CSN5 subfamily. Component of the COP9 signalosome (CSN) complex.

It localises to the cytoplasm. It is found in the nucleus. Its function is as follows. Catalytic Component of the COP9 signalosome (CSN) complex that acts as an regulator of the ubiquitin (Ubl) conjugation pathway by mediating the deneddylation of the cullin subunit of SCF-type E3 ubiquitin-protein ligase complexes. The polypeptide is COP9 signalosome complex subunit 5 (RRI1) (Yarrowia lipolytica (strain CLIB 122 / E 150) (Yeast)).